The sequence spans 205 residues: Ribosomal RNA small subunit methyltransferase G (205 aa).

S-adenosyl-L-methionine-binding positions include glycine 66, phenylalanine 71, 119-120, and arginine 135; that span reads IE.

The protein belongs to the methyltransferase superfamily. RNA methyltransferase RsmG family.

The protein localises to the cytoplasm. The catalysed reaction is guanosine(527) in 16S rRNA + S-adenosyl-L-methionine = N(7)-methylguanosine(527) in 16S rRNA + S-adenosyl-L-homocysteine. Its function is as follows. Specifically methylates the N7 position of guanine in position 527 of 16S rRNA. The polypeptide is Ribosomal RNA small subunit methyltransferase G (Rhizobium etli (strain CIAT 652)).